The following is a 465-amino-acid chain: Cysteine--tRNA ligase (465 aa).

Cys27 lines the Zn(2+) pocket. A 'HIGH' region motif is present at residues 29–39 (PTVYNFFHIGN). Zn(2+) is bound by residues Cys207, His232, and Glu236. The 'KMSKS' region signature appears at 264-268 (KMSKS). Lys267 contributes to the ATP binding site.

Belongs to the class-I aminoacyl-tRNA synthetase family. In terms of assembly, monomer. Zn(2+) serves as cofactor.

The protein localises to the cytoplasm. It catalyses the reaction tRNA(Cys) + L-cysteine + ATP = L-cysteinyl-tRNA(Cys) + AMP + diphosphate. The protein is Cysteine--tRNA ligase of Clostridium botulinum (strain Okra / Type B1).